The primary structure comprises 102 residues: Small ribosomal subunit protein uS10 (102 aa).

Belongs to the universal ribosomal protein uS10 family. As to quaternary structure, part of the 30S ribosomal subunit.

Functionally, involved in the binding of tRNA to the ribosomes. The chain is Small ribosomal subunit protein uS10 from Limosilactobacillus reuteri (strain DSM 20016) (Lactobacillus reuteri).